The following is a 183-amino-acid chain: Inosine/xanthosine triphosphatase (183 aa).

Asp75 is a binding site for Mg(2+). Residue Asp75–Gly76 participates in substrate binding.

The protein belongs to the YjjX NTPase family. In terms of assembly, homodimer. Requires Mg(2+) as cofactor. Mn(2+) is required as a cofactor.

The enzyme catalyses XTP + H2O = XDP + phosphate + H(+). It catalyses the reaction ITP + H2O = IDP + phosphate + H(+). In terms of biological role, phosphatase that hydrolyzes non-canonical purine nucleotides such as XTP and ITP to their respective diphosphate derivatives. Probably excludes non-canonical purines from DNA/RNA precursor pool, thus preventing their incorporation into DNA/RNA and avoiding chromosomal lesions. This chain is Inosine/xanthosine triphosphatase, found in Vibrio vulnificus (strain CMCP6).